Reading from the N-terminus, the 2390-residue chain is Spectrin beta chain, non-erythrocytic 2 (2390 aa).

Ser-2 is subject to N-acetylserine. The actin-binding stretch occupies residues 2–278 (SSTLSPTDFD…IITYVATYYH (277 aa)). Phosphoserine occurs at positions 6 and 31. Calponin-homology (CH) domains follow at residues 57–161 (AVQK…LRFQ) and 176–281 (KSAK…HYFS). 6 Spectrin repeats span residues 306-414 (LVEK…LALR), 427-527 (AARF…RERL), 532-639 (ELQK…RLEE), 642-744 (RLWR…QRLA), 749-849 (LYQF…RALE), and 855-954 (YTML…KAAL). Phosphoserine is present on Ser-959. Spectrin repeat units follow at residues 960 to 1063 (IQNY…SLGE), 1066 to 1169 (RLQD…GRLA), 1174 to 1262 (FQGF…RHKK), 1279 to 1379 (EQQH…ARSL), 1384 to 1485 (RAEL…RRLQ), 1489 to 1586 (EQHQ…RLED), 1589 to 1692 (RAQQ…RLQE), 1696 to 1797 (LCQL…GQVL), 1801 to 1904 (YELQ…QLLL), 1910 to 2010 (FRFF…DWLQ), and 2017 to 2076 (VFGR…EKLT). Ser-1073 is subject to Phosphoserine. A compositionally biased stretch (basic and acidic residues) spans 2081-2096 (REKERKRKREEEERRK). Disordered stretches follow at residues 2081–2222 (REKE…EQME) and 2331–2390 (SSAS…KKNK). Over residues 2116–2125 (QTASDTTWDG) the composition is skewed to polar residues. Ser-2171 and Ser-2199 each carry phosphoserine. One can recognise a PH domain in the interval 2218 to 2328 (QEQMEGMLCR…WLRVVNAAIA (111 aa)). Thr-2354 is subject to Phosphothreonine. At Ser-2359 the chain carries Phosphoserine. A compositionally biased stretch (basic and acidic residues) spans 2370–2383 (RSKDGREREREKRF).

It belongs to the spectrin family. In terms of tissue distribution, highly expressed in brain, kidney, pancreas, and liver, and at lower levels in lung and placenta.

It localises to the cytoplasm. It is found in the cytoskeleton. The protein localises to the cell cortex. Probably plays an important role in neuronal membrane skeleton. This Homo sapiens (Human) protein is Spectrin beta chain, non-erythrocytic 2 (SPTBN2).